The primary structure comprises 222 residues: GTP cyclohydrolase 1 (222 aa).

Cys-111, His-114, and Cys-182 together coordinate Zn(2+).

This sequence belongs to the GTP cyclohydrolase I family. Homomer.

The catalysed reaction is GTP + H2O = 7,8-dihydroneopterin 3'-triphosphate + formate + H(+). It participates in cofactor biosynthesis; 7,8-dihydroneopterin triphosphate biosynthesis; 7,8-dihydroneopterin triphosphate from GTP: step 1/1. The protein is GTP cyclohydrolase 1 of Klebsiella pneumoniae (strain 342).